We begin with the raw amino-acid sequence, 746 residues long: Polyribonucleotide nucleotidyltransferase (746 aa).

Mg(2+)-binding residues include Asp520 and Asp526. Positions 586-648 (PRIITVKVPV…EAARAAVNAI (63 aa)) constitute a KH domain. In terms of domain architecture, S1 motif spans 657 to 729 (GERYLGTVVK…PRGKLSLVPV (73 aa)).

It belongs to the polyribonucleotide nucleotidyltransferase family. Requires Mg(2+) as cofactor.

It localises to the cytoplasm. It catalyses the reaction RNA(n+1) + phosphate = RNA(n) + a ribonucleoside 5'-diphosphate. Involved in mRNA degradation. Catalyzes the phosphorolysis of single-stranded polyribonucleotides processively in the 3'- to 5'-direction. This Kineococcus radiotolerans (strain ATCC BAA-149 / DSM 14245 / SRS30216) protein is Polyribonucleotide nucleotidyltransferase.